The sequence spans 164 residues: Monothiol glutaredoxin-S10 (164 aa).

The region spanning 60 to 161 is the Glutaredoxin domain; it reads EDSVKRTLAD…TMLSELDIDV (102 aa). Residue Cys80 participates in [2Fe-2S] cluster binding.

Belongs to the glutaredoxin family. CPYC subfamily.

The protein resides in the cytoplasm. May only reduce GSH-thiol disulfides, but not protein disulfides. The sequence is that of Monothiol glutaredoxin-S10 (GRXS10) from Oryza sativa subsp. japonica (Rice).